We begin with the raw amino-acid sequence, 390 residues long: MTIRKMTELNITEKRILIRSDLNVPIENGIIQSDARILAALPTIELALQKKAKVIIMSHLGRPKEGYYTKKYSLFPIFEYFKKKFNNTKIYFSNNFLDGIKLNPGEIALLENTRFNKGELNNDEQLSKKYSDLCDIFVMDAFGSAHRMQSSTYGIGKFVKIACAGLLLISEIDALKKALKKPKRPMVAIVGGSKVSTKFNVLNKLSKIADTIIVGGGIANTFLAIDYKIGKSLYEPDFVFEAKKLRDKYNIIVPIDSRVGKNFCKNEQAIIKSPDNIKEDEEIMDFGDESIKKIISIITQSQTIMWNGPVGVFEFPNFRKGTEMIAKTIANSNAFSIAGGGDTLSVIDMFNIKNNISYISTGGGAFLEFIEGKKLPAIQMLEENFKNKSK.

Substrate contacts are provided by residues 21 to 23, Arg-36, 59 to 62, Arg-114, and Arg-147; these read DLN and HLGR. Residues Lys-198, Glu-314, and 340–343 each bind ATP; that span reads GGDT.

It belongs to the phosphoglycerate kinase family. As to quaternary structure, monomer.

Its subcellular location is the cytoplasm. It carries out the reaction (2R)-3-phosphoglycerate + ATP = (2R)-3-phospho-glyceroyl phosphate + ADP. Its pathway is carbohydrate degradation; glycolysis; pyruvate from D-glyceraldehyde 3-phosphate: step 2/5. This is Phosphoglycerate kinase (pgk) from Buchnera aphidicola subsp. Acyrthosiphon pisum (strain APS) (Acyrthosiphon pisum symbiotic bacterium).